We begin with the raw amino-acid sequence, 256 residues long: H-2 class II histocompatibility antigen, A-K alpha chain (256 aa).

Positions 1-23 (MPRSRALILGVLALTTMLSLCGG) are cleaved as a signal peptide. An alpha-1 region spans residues 24–111 (EDDIEADHVG…KRSNSTPATN (88 aa)). Over 24–218 (EDDIEADHVG…IPAPMSELTE (195 aa)) the chain is Extracellular. 2 N-linked (GlcNAc...) asparagine glycosylation sites follow: N105 and N145. The alpha-2 stretch occupies residues 112–205 (EAPQATVFPK…GLEEPVLKHW (94 aa)). The Ig-like C1-type domain occupies 114–206 (PQATVFPKSP…LEEPVLKHWE (93 aa)). C134 and C190 are disulfide-bonded. The tract at residues 206–218 (EPEIPAPMSELTE) is connecting peptide. The chain crosses the membrane as a helical span at residues 219-241 (TVVCALGLSVGLVGIVVGTIFII). Residues 242–256 (QGLRSGGTSRHPGPL) lie on the Cytoplasmic side of the membrane.

The protein belongs to the MHC class II family.

The protein localises to the membrane. The polypeptide is H-2 class II histocompatibility antigen, A-K alpha chain (H2-Aa) (Mus musculus (Mouse)).